We begin with the raw amino-acid sequence, 275 residues long: Dermonecrotic toxin LruSicTox-alphaIV1 (275 aa).

The active site involves His-5. Mg(2+) is bound by residues Glu-25 and Asp-27. Residue His-41 is the Nucleophile of the active site. Disulfide bonds link Cys-45/Cys-51 and Cys-47/Cys-192. Mg(2+) is bound at residue Asp-85.

The protein belongs to the arthropod phospholipase D family. Class II subfamily. Mg(2+) is required as a cofactor. In terms of tissue distribution, expressed by the venom gland.

Its subcellular location is the secreted. The enzyme catalyses an N-(acyl)-sphingosylphosphocholine = an N-(acyl)-sphingosyl-1,3-cyclic phosphate + choline. It carries out the reaction an N-(acyl)-sphingosylphosphoethanolamine = an N-(acyl)-sphingosyl-1,3-cyclic phosphate + ethanolamine. It catalyses the reaction a 1-acyl-sn-glycero-3-phosphocholine = a 1-acyl-sn-glycero-2,3-cyclic phosphate + choline. The catalysed reaction is a 1-acyl-sn-glycero-3-phosphoethanolamine = a 1-acyl-sn-glycero-2,3-cyclic phosphate + ethanolamine. Functionally, dermonecrotic toxins cleave the phosphodiester linkage between the phosphate and headgroup of certain phospholipids (sphingolipid and lysolipid substrates), forming an alcohol (often choline) and a cyclic phosphate. This toxin acts on sphingomyelin (SM). It may also act on ceramide phosphoethanolamine (CPE), lysophosphatidylcholine (LPC) and lysophosphatidylethanolamine (LPE), but not on lysophosphatidylserine (LPS), and lysophosphatidylglycerol (LPG). It acts by transphosphatidylation, releasing exclusively cyclic phosphate products as second products. Induces dermonecrosis, hemolysis, increased vascular permeability, edema, inflammatory response, and platelet aggregation. The protein is Dermonecrotic toxin LruSicTox-alphaIV1 of Loxosceles rufescens (Mediterranean recluse spider).